Consider the following 907-residue polypeptide: Protein translocase subunit SecA (907 aa).

ATP contacts are provided by residues glutamine 87, 105-109 (GEGKT), and aspartate 510. The Zn(2+) site is built by cysteine 892, cysteine 894, cysteine 903, and histidine 904.

It belongs to the SecA family. Monomer and homodimer. Part of the essential Sec protein translocation apparatus which comprises SecA, SecYEG and auxiliary proteins SecDF-YajC and YidC. Zn(2+) is required as a cofactor.

The protein localises to the cell inner membrane. The protein resides in the cytoplasm. The catalysed reaction is ATP + H2O + cellular proteinSide 1 = ADP + phosphate + cellular proteinSide 2.. Functionally, part of the Sec protein translocase complex. Interacts with the SecYEG preprotein conducting channel. Has a central role in coupling the hydrolysis of ATP to the transfer of proteins into and across the cell membrane, serving both as a receptor for the preprotein-SecB complex and as an ATP-driven molecular motor driving the stepwise translocation of polypeptide chains across the membrane. The protein is Protein translocase subunit SecA of Acinetobacter baumannii (strain AB0057).